Consider the following 374-residue polypeptide: Anhydro-N-acetylmuramic acid kinase (374 aa).

9-16 (GTSLDGID) lines the ATP pocket.

Belongs to the anhydro-N-acetylmuramic acid kinase family.

It catalyses the reaction 1,6-anhydro-N-acetyl-beta-muramate + ATP + H2O = N-acetyl-D-muramate 6-phosphate + ADP + H(+). It participates in amino-sugar metabolism; 1,6-anhydro-N-acetylmuramate degradation. It functions in the pathway cell wall biogenesis; peptidoglycan recycling. Catalyzes the specific phosphorylation of 1,6-anhydro-N-acetylmuramic acid (anhMurNAc) with the simultaneous cleavage of the 1,6-anhydro ring, generating MurNAc-6-P. Is required for the utilization of anhMurNAc either imported from the medium or derived from its own cell wall murein, and thus plays a role in cell wall recycling. The polypeptide is Anhydro-N-acetylmuramic acid kinase (Methylobacterium nodulans (strain LMG 21967 / CNCM I-2342 / ORS 2060)).